Consider the following 232-residue polypeptide: AA9 family lytic polysaccharide monooxygenase C (232 aa).

A signal peptide spans 1–19 (MKAAVSLALLVAVAGAASA). 2 residues coordinate Cu(2+): His-20 and His-91. Cysteines 61 and 180 form a disulfide. His-166 and Gln-175 together coordinate O2. A Cu(2+)-binding site is contributed by Tyr-177. Asn-184 carries N-linked (GlcNAc...) asparagine glycosylation.

It belongs to the polysaccharide monooxygenase AA9 family. The cofactor is Cu(2+).

The protein resides in the secreted. It carries out the reaction [(1-&gt;4)-beta-D-glucosyl]n+m + reduced acceptor + O2 = 4-dehydro-beta-D-glucosyl-[(1-&gt;4)-beta-D-glucosyl]n-1 + [(1-&gt;4)-beta-D-glucosyl]m + acceptor + H2O.. In terms of biological role, lytic polysaccharide monooxygenase (LPMO) that depolymerizes crystalline and amorphous polysaccharides via the oxidation of scissile alpha- or beta-(1-4)-glycosidic bonds, yielding C1 or C4 oxidation products. Catalysis by LPMOs requires the reduction of the active-site copper from Cu(II) to Cu(I) by a reducing agent and H(2)O(2) or O(2) as a cosubstrate. In Malbranchea cinnamomea (Thermophilic fungus), this protein is AA9 family lytic polysaccharide monooxygenase C.